The primary structure comprises 392 residues: Probable tRNA sulfurtransferase (392 aa).

The 108-residue stretch at 59-166 (DEIIERVKKV…ECSFVFTKKV (108 aa)) folds into the THUMP domain. Residues 183-184 (LL), 208-209 (HF), arginine 265, glycine 287, and glutamine 296 each bind ATP.

This sequence belongs to the ThiI family.

It localises to the cytoplasm. The enzyme catalyses [ThiI sulfur-carrier protein]-S-sulfanyl-L-cysteine + a uridine in tRNA + 2 reduced [2Fe-2S]-[ferredoxin] + ATP + H(+) = [ThiI sulfur-carrier protein]-L-cysteine + a 4-thiouridine in tRNA + 2 oxidized [2Fe-2S]-[ferredoxin] + AMP + diphosphate. It catalyses the reaction [ThiS sulfur-carrier protein]-C-terminal Gly-Gly-AMP + S-sulfanyl-L-cysteinyl-[cysteine desulfurase] + AH2 = [ThiS sulfur-carrier protein]-C-terminal-Gly-aminoethanethioate + L-cysteinyl-[cysteine desulfurase] + A + AMP + 2 H(+). The protein operates within cofactor biosynthesis; thiamine diphosphate biosynthesis. Its function is as follows. Catalyzes the ATP-dependent transfer of a sulfur to tRNA to produce 4-thiouridine in position 8 of tRNAs, which functions as a near-UV photosensor. Also catalyzes the transfer of sulfur to the sulfur carrier protein ThiS, forming ThiS-thiocarboxylate. This is a step in the synthesis of thiazole, in the thiamine biosynthesis pathway. The sulfur is donated as persulfide by IscS. The polypeptide is Probable tRNA sulfurtransferase (Alkaliphilus metalliredigens (strain QYMF)).